The primary structure comprises 294 residues: MLKGAVTALITPFDDNGAIDEKAFCNFVEWQITQGINGVSPVGTTGESPTLSHEERKQVVELCVEQVAKRVPVVAGAGSNSTSEAVELAQHAEKAGADAILVVTPYYNKPNQKGLYTHFSSIAKAISIPVIIYNIPGRSVIDMAVETMRDLCQDFKNIIGVKDATSKIGRVSEQREKCGKDFIQLSGDDCIALGFNAHGGVGCISVSSNVAPKLCAELHAACFRGDYETALKLNDLLMPLNRAVFIEPSPAGIKYAAAKLGLCGSLVRSPIVPLAETTKKIIDAALHHAGLLKE.

Threonine 45 is a pyruvate binding site. The Proton donor/acceptor role is filled by tyrosine 133. Lysine 162 (schiff-base intermediate with substrate) is an active-site residue. Position 204 (isoleucine 204) interacts with pyruvate.

The protein belongs to the DapA family. Homotetramer; dimer of dimers.

It localises to the cytoplasm. The enzyme catalyses L-aspartate 4-semialdehyde + pyruvate = (2S,4S)-4-hydroxy-2,3,4,5-tetrahydrodipicolinate + H2O + H(+). The protein operates within amino-acid biosynthesis; L-lysine biosynthesis via DAP pathway; (S)-tetrahydrodipicolinate from L-aspartate: step 3/4. Catalyzes the condensation of (S)-aspartate-beta-semialdehyde [(S)-ASA] and pyruvate to 4-hydroxy-tetrahydrodipicolinate (HTPA). This Bartonella quintana (strain Toulouse) (Rochalimaea quintana) protein is 4-hydroxy-tetrahydrodipicolinate synthase.